The primary structure comprises 229 residues: Translin (229 aa).

Residues Arg86–His90 are DNA/RNA binding. The segment at Leu177–Leu198 is leucine-zipper.

The protein belongs to the translin family. As to quaternary structure, ring-shaped heterooctamer of six TSN and two TSNAX subunits, DNA/RNA binding occurs inside the ring.

Its subcellular location is the cytoplasm. It localises to the nucleus. Its function is as follows. Exhibits both single-stranded and double-stranded endoribonuclease activity. May act as an activator of RNA-induced silencing complex (RISC) by facilitating endonucleolytic cleavage of the siRNA passenger strand. In terms of biological role, DNA-binding protein that specifically recognizes consensus sequences at the breakpoint junctions in chromosomal translocations, mostly involving immunoglobulin (Ig)/T-cell receptor gene segments. Seems to recognize single-stranded DNA ends generated by staggered breaks occurring at recombination hot spots. This chain is Translin (TSN), found in Gallus gallus (Chicken).